The sequence spans 199 residues: Transgelin-3 (199 aa).

In terms of domain architecture, Calponin-homology (CH) spans 24–136; it reads ADLENKLVDW…RTLMALGSVA (113 aa). A Phosphoserine modification is found at S163. Residues 174–199 form a Calponin-like repeat; it reads IGLQMGSNKGASQAGMTGYGMPRQIM. Residues 178 to 188 show a composition bias toward polar residues; it reads MGSNKGASQAG. A disordered region spans residues 178-199; that stretch reads MGSNKGASQAGMTGYGMPRQIM.

It belongs to the calponin family.

The protein is Transgelin-3 (Tagln3) of Mus musculus (Mouse).